Reading from the N-terminus, the 275-residue chain is Chlorophyll a-b binding protein 3, chloroplastic (275 aa).

Trp58 provides a ligand contact to chlorophyll b. Chlorophyll a-binding residues include Phe78, Ser84, and Glu102. Residues Arg107, Ile142, Glu169, and Arg172 each coordinate chlorophyll b. Positions 226, 227, 230, 232, 244, and 259 each coordinate chlorophyll a. A helical membrane pass occupies residues Leu233 to Tyr253.

The protein belongs to the light-harvesting chlorophyll a/b-binding (LHC) protein family. The LHC complex consists of chlorophyll a-b binding proteins. Requires Binds at least 14 chlorophylls (8 Chl-a and 6 Chl-b) and carotenoids such as lutein and neoxanthin. as cofactor. Post-translationally, photoregulated by reversible phosphorylation of its threonine residues.

It localises to the plastid. Its subcellular location is the chloroplast thylakoid membrane. Its function is as follows. The light-harvesting complex (LHC) functions as a light receptor, it captures and delivers excitation energy to photosystems with which it is closely associated. In terms of biological role, may channel protons produced in the catalytic Mn center of water oxidation into the thylakoid lumen. The sequence is that of Chlorophyll a-b binding protein 3, chloroplastic from Pisum sativum (Garden pea).